A 425-amino-acid chain; its full sequence is GTPase Obg (425 aa).

Residues 1–158 (MFKDYAKIHV…LWLELELKLL (158 aa)) enclose the Obg domain. In terms of domain architecture, OBG-type G spans 159 to 329 (ADVGLVGFPN…LIYRTYRLLE (171 aa)). GTP contacts are provided by residues 165-172 (GFPNAGKS), 190-194 (FTTLE), 212-215 (DIPG), 282-285 (NKTD), and 310-312 (SAL). Mg(2+) is bound by residues Ser172 and Thr192. An OCT domain is found at 341-421 (VPDERETDVT…IGRFEFEYSE (81 aa)).

The protein belongs to the TRAFAC class OBG-HflX-like GTPase superfamily. OBG GTPase family. Monomer. It depends on Mg(2+) as a cofactor.

The protein localises to the cytoplasm. Its function is as follows. An essential GTPase which binds GTP, GDP and possibly (p)ppGpp with moderate affinity, with high nucleotide exchange rates and a fairly low GTP hydrolysis rate. Plays a role in control of the cell cycle, stress response, ribosome biogenesis and in those bacteria that undergo differentiation, in morphogenesis control. This Desulforudis audaxviator (strain MP104C) protein is GTPase Obg.